A 298-amino-acid polypeptide reads, in one-letter code: MPHDNIPFPVTFAAGAVAGISEVLTLYPLDVVKTRMQLSVGKSDYNGTFDCLKKIVKNEGPHRLYRGILPPILMEAPKRALKFASNDTYSKLWRKVFKRKDSSPALSILTGSCAGFTETFVVVPFELMKIRLQDVKNASKYNGTVDCFTKIVKQERILALYNGFEATMWRHVVWNAGYFGVIQKIRNSLTPASSRIGEIRNNLIAGTIGGIFGTFLSTPFDVIKSRIQTVPRIAGQVPKYNWAYPALVTVAREEGFTALYKGFVPKVLRLGPGGGILLVVFNSVIEFYKRCLVHNASA.

Transmembrane regions (helical) follow at residues 6-26, 62-81, 105-125, 159-179, 203-223, and 267-287; these read IPFP…VLTL, HRLY…KRAL, ALSI…VVPF, ALYN…AGYF, LIAG…FDVI, and VLRL…VIEF. Solcar repeat units follow at residues 6–92, 102–188, and 197–287; these read IPFP…YSKL, SSPA…IRNS, and GEIR…VIEF.

The protein belongs to the mitochondrial carrier (TC 2.A.29) family.

The protein resides in the mitochondrion inner membrane. Functionally, transports C5-C7 oxodicarboxylates across the inner membranes of mitochondria. The protein is Probable mitochondrial 2-oxodicarboxylate carrier of Schizosaccharomyces pombe (strain 972 / ATCC 24843) (Fission yeast).